Reading from the N-terminus, the 209-residue chain is Octanoyltransferase (209 aa).

The region spanning 30–209 is the BPL/LPL catalytic domain; it reads DHEPEIIYLV…IQTEFNKIFK (180 aa). Residues 69–76, 143–145, and 156–158 contribute to the substrate site; these read RGGKFTFH, AIG, and GVA. Cys-174 acts as the Acyl-thioester intermediate in catalysis.

Belongs to the LipB family.

It is found in the cytoplasm. It catalyses the reaction octanoyl-[ACP] + L-lysyl-[protein] = N(6)-octanoyl-L-lysyl-[protein] + holo-[ACP] + H(+). It participates in protein modification; protein lipoylation via endogenous pathway; protein N(6)-(lipoyl)lysine from octanoyl-[acyl-carrier-protein]: step 1/2. Catalyzes the transfer of endogenously produced octanoic acid from octanoyl-acyl-carrier-protein onto the lipoyl domains of lipoate-dependent enzymes. Lipoyl-ACP can also act as a substrate although octanoyl-ACP is likely to be the physiological substrate. The polypeptide is Octanoyltransferase (Rickettsia africae (strain ESF-5)).